Reading from the N-terminus, the 56-residue chain is Large ribosomal subunit protein bL33 (56 aa).

Belongs to the bacterial ribosomal protein bL33 family.

This chain is Large ribosomal subunit protein bL33, found in Anaplasma marginale (strain Florida).